Here is a 521-residue protein sequence, read N- to C-terminus: MANVNGSFVSPSADATISPQLFYNVDSLSAVLNGFTFWKALATLFFAAVIYDQLRYFYLKGSLVGPTFKLPFMGPFLQSVNPKFHEYKAKWDSGELSCVSVFHKFVVIASTRDMSRKIFNSPAYVKPCVVDIAHKLLGPDNWVFLDGKEHVEFRKGLNGLFTRSALSSYLPVMEECYNKYYKYFLEKSKANDYKPEPWMPEFRELMCAVSCRTFVGHYMTDAAIKKIADDYYMITAALELVNFPFILPFTKAWYGKKASDMVLEEFSNCAAKSKAHMAAGGEITCIMDAWVKAQQDSAKYNEKIAKGLPVEDSEKPSHLLREFTDYEIAQTVFTLLFASQDATSAACTWLFQLVADRPDVLEKIREENLRVRNGNINAPLTMDLLDEMKYTRAVVRETLRYRPPVIMVPYLVKKDFPITDSITVSKGSMIIPSVWPATHDPEAYPNPDSFDPDRWITGDAEKQAKNFLVFGTGPHYCLGQTYAQLNLIAMIGKASLEMDWEHAPTPKSEDIKVFATIFPEV.

A helical membrane pass occupies residues 30-50; that stretch reads AVLNGFTFWKALATLFFAAVI.

The protein belongs to the cytochrome P450 family. Heme is required as a cofactor.

The protein resides in the endoplasmic reticulum membrane. The enzyme catalyses 5-dehydroepisterol + NADPH + O2 + H(+) = ergosta-5,7,22,24(28)-tetraen-3beta-ol + NADP(+) + 2 H2O. The protein operates within steroid metabolism; ergosterol biosynthesis. C-22 sterol desaturase; part of the third module of ergosterol biosynthesis pathway that includes the late steps of the pathway. Erg5 converts 5-dehydroepisterol into ergosta-5,7,22,24(28)-tetraen-3beta-ol by forming the C-22(23) double bond in the sterol side chain. The third module or late pathway involves the ergosterol synthesis itself through consecutive reactions that mainly occur in the endoplasmic reticulum (ER) membrane. Firstly, the squalene synthase erg9 catalyzes the condensation of 2 farnesyl pyrophosphate moieties to form squalene, which is the precursor of all steroids. Squalene synthase is crucial for balancing the incorporation of farnesyl diphosphate (FPP) into sterol and nonsterol isoprene synthesis. Secondly, squalene is converted into lanosterol by the consecutive action of the squalene epoxidase erg1 and the lanosterol synthase erg7. Then, the delta(24)-sterol C-methyltransferase erg6 methylates lanosterol at C-24 to produce eburicol. Eburicol is the substrate of the sterol 14-alpha demethylase encoded by cyp51A and cyp51B, to yield 4,4,24-trimethyl ergosta-8,14,24(28)-trienol. The C-14 reductase erg24 then reduces the C14=C15 double bond which leads to 4,4-dimethylfecosterol. A sequence of further demethylations at C-4, involving the C-4 demethylation complex containing the C-4 methylsterol oxidases erg25A or erg25B, the sterol-4-alpha-carboxylate 3-dehydrogenase erg26 and the 3-keto-steroid reductase erg27, leads to the production of fecosterol via 4-methylfecosterol. The C-8 sterol isomerase erg2 then catalyzes the reaction which results in unsaturation at C-7 in the B ring of sterols and thus converts fecosterol to episterol. The sterol-C5-desaturase erg3B then catalyzes the introduction of a C-5 double bond in the B ring to produce 5-dehydroepisterol. The 2 other sterol-C5-desaturases, erg3A and erg3C, seem to be less important in ergosterol biosynthesis. The C-22 sterol desaturase erg5 further converts 5-dehydroepisterol into ergosta-5,7,22,24(28)-tetraen-3beta-ol by forming the C-22(23) double bond in the sterol side chain. Finally, ergosta-5,7,22,24(28)-tetraen-3beta-ol is substrate of the C-24(28) sterol reductases erg4A and erg4B to produce ergosterol. Possible alternative sterol biosynthetic pathways might exist from fecosterol to ergosterol, depending on the activities of the erg3 isoforms. The chain is C-22 sterol desaturase erg5 from Aspergillus fumigatus (strain ATCC MYA-4609 / CBS 101355 / FGSC A1100 / Af293) (Neosartorya fumigata).